Consider the following 693-residue polypeptide: Phosphoribosylformylglycinamidine synthase subunit PurL (693 aa).

Histidine 34 is an active-site residue. ATP contacts are provided by tyrosine 37 and lysine 76. Glutamate 78 contributes to the Mg(2+) binding site. Substrate is bound by residues 79 to 82 (SHNH) and arginine 101. Histidine 80 serves as the catalytic Proton acceptor. Position 102 (aspartate 102) interacts with Mg(2+). Residue glutamine 222 participates in substrate binding. Aspartate 248 is a Mg(2+) binding site. 292 to 294 (ETQ) is a substrate binding site. Residues aspartate 470 and glycine 507 each coordinate ATP. Substrate is bound at residue serine 510.

It belongs to the FGAMS family. Monomer. Part of the FGAM synthase complex composed of 1 PurL, 1 PurQ and 2 PurS subunits.

The protein localises to the cytoplasm. The catalysed reaction is N(2)-formyl-N(1)-(5-phospho-beta-D-ribosyl)glycinamide + L-glutamine + ATP + H2O = 2-formamido-N(1)-(5-O-phospho-beta-D-ribosyl)acetamidine + L-glutamate + ADP + phosphate + H(+). It functions in the pathway purine metabolism; IMP biosynthesis via de novo pathway; 5-amino-1-(5-phospho-D-ribosyl)imidazole from N(2)-formyl-N(1)-(5-phospho-D-ribosyl)glycinamide: step 1/2. Part of the phosphoribosylformylglycinamidine synthase complex involved in the purines biosynthetic pathway. Catalyzes the ATP-dependent conversion of formylglycinamide ribonucleotide (FGAR) and glutamine to yield formylglycinamidine ribonucleotide (FGAM) and glutamate. The FGAM synthase complex is composed of three subunits. PurQ produces an ammonia molecule by converting glutamine to glutamate. PurL transfers the ammonia molecule to FGAR to form FGAM in an ATP-dependent manner. PurS interacts with PurQ and PurL and is thought to assist in the transfer of the ammonia molecule from PurQ to PurL. The polypeptide is Phosphoribosylformylglycinamidine synthase subunit PurL (Pyrobaculum islandicum (strain DSM 4184 / JCM 9189 / GEO3)).